Reading from the N-terminus, the 151-residue chain is UPF0756 membrane protein HS_0993 (151 aa).

4 helical membrane-spanning segments follow: residues 1-21 (MSLQ…LGVL), 52-72 (YGVN…IVSG), 81-101 (ALIH…AWFG), and 123-143 (ILGV…AGIL).

The protein belongs to the UPF0756 family.

It is found in the cell membrane. In Histophilus somni (strain 129Pt) (Haemophilus somnus), this protein is UPF0756 membrane protein HS_0993.